The following is a 78-amino-acid chain: Putative membrane protein insertion efficiency factor (78 aa).

The protein belongs to the UPF0161 family.

It localises to the cell inner membrane. In terms of biological role, could be involved in insertion of integral membrane proteins into the membrane. The chain is Putative membrane protein insertion efficiency factor from Thiobacillus denitrificans (strain ATCC 25259 / T1).